An 838-amino-acid polypeptide reads, in one-letter code: Translation initiation factor IF-2 (838 aa).

2 disordered regions span residues 30 to 60 and 94 to 254; these read PHTA…KVEE and QRSP…PTGP. Composition is skewed to basic and acidic residues over residues 33-43 and 96-136; these read AAEEHVSDSEK and SPEE…EARR. Residues 137 to 173 show a composition bias toward low complexity; the sequence is QPAPVAEPVAAQAAAPAPAPVVEPVQEAPVATAAPAA. Basic and acidic residues-rich tracts occupy residues 174 to 214 and 222 to 231; these read DARK…EKAP and TTDEESDGFR. A compositionally biased stretch (basic residues) spans 232 to 245; that stretch reads RGGRGKAKLKKRNA. The tr-type G domain occupies 338–507; that stretch reads ARAPVVTVMG…LLQAEVLELK (170 aa). The segment at 347-354 is G1; the sequence is GHVDHGKT. 347–354 contributes to the GTP binding site; sequence GHVDHGKT. Residues 372-376 are G2; that stretch reads GITQH. The tract at residues 393-396 is G3; it reads DTPG. GTP is bound by residues 393–397 and 447–450; these read DTPGH and NKID. Residues 447-450 are G4; it reads NKID. A G5 region spans residues 483–485; that stretch reads SAK.

Belongs to the TRAFAC class translation factor GTPase superfamily. Classic translation factor GTPase family. IF-2 subfamily.

The protein resides in the cytoplasm. One of the essential components for the initiation of protein synthesis. Protects formylmethionyl-tRNA from spontaneous hydrolysis and promotes its binding to the 30S ribosomal subunits. Also involved in the hydrolysis of GTP during the formation of the 70S ribosomal complex. The protein is Translation initiation factor IF-2 of Pseudomonas fluorescens (strain ATCC BAA-477 / NRRL B-23932 / Pf-5).